The sequence spans 121 residues: Small ribosomal subunit protein uS13 (121 aa).

Residues His92 to Arg121 are disordered. Residues Gln101 to Arg121 show a composition bias toward basic residues.

This sequence belongs to the universal ribosomal protein uS13 family. As to quaternary structure, part of the 30S ribosomal subunit. Forms a loose heterodimer with protein S19. Forms two bridges to the 50S subunit in the 70S ribosome.

Located at the top of the head of the 30S subunit, it contacts several helices of the 16S rRNA. In the 70S ribosome it contacts the 23S rRNA (bridge B1a) and protein L5 of the 50S subunit (bridge B1b), connecting the 2 subunits; these bridges are implicated in subunit movement. Contacts the tRNAs in the A and P-sites. The sequence is that of Small ribosomal subunit protein uS13 from Petrotoga mobilis (strain DSM 10674 / SJ95).